Here is a 274-residue protein sequence, read N- to C-terminus: Outer surface protein A (274 aa).

The N-terminal stretch at 1–16 (MKKYLLGIGLILALIA) is a signal peptide. C17 carries the N-palmitoyl cysteine lipid modification. C17 is lipidated: S-diacylglycerol cysteine.

Belongs to the OspA lipoprotein family.

Its subcellular location is the cell outer membrane. The protein localises to the cell surface. This Borreliella burgdorferi (Lyme disease spirochete) protein is Outer surface protein A.